The following is a 394-amino-acid chain: Ribulose bisphosphate carboxylase large chain (394 aa).

Lysine 5 bears the N6,N6,N6-trimethyllysine mark. Residues asparagine 114 and threonine 164 each contribute to the substrate site. The Proton acceptor role is filled by lysine 166. A substrate-binding site is contributed by lysine 168. The Mg(2+) site is built by lysine 192, aspartate 194, and glutamate 195. Lysine 192 carries the post-translational modification N6-carboxylysine. Histidine 285 acts as the Proton acceptor in catalysis. Residues arginine 286, histidine 318, and serine 370 each coordinate substrate.

This sequence belongs to the RuBisCO large chain family. Type I subfamily. As to quaternary structure, heterohexadecamer of 8 large chains and 8 small chains. Mg(2+) is required as a cofactor.

Its subcellular location is the plastid. The protein resides in the chloroplast. It carries out the reaction 2 (2R)-3-phosphoglycerate + 2 H(+) = D-ribulose 1,5-bisphosphate + CO2 + H2O. The enzyme catalyses D-ribulose 1,5-bisphosphate + O2 = 2-phosphoglycolate + (2R)-3-phosphoglycerate + 2 H(+). In terms of biological role, ruBisCO catalyzes two reactions: the carboxylation of D-ribulose 1,5-bisphosphate, the primary event in carbon dioxide fixation, as well as the oxidative fragmentation of the pentose substrate in the photorespiration process. Both reactions occur simultaneously and in competition at the same active site. The protein is Ribulose bisphosphate carboxylase large chain (rbcL) of Cabomba caroliniana (Carolina fanwort).